A 628-amino-acid chain; its full sequence is Siderophore iron transporter 1 (628 aa).

Transmembrane regions (helical) follow at residues 68–88 (IYRV…GLDG), 107–127 (LLST…IFFA), 132–152 (IFGR…GTII), 164–184 (VGGC…EVIA), 194–214 (LLAL…SGNV), 225–245 (GIGM…ICML), 285–305 (IIGM…FTLA), 317–337 (IIVP…LWEI), 354–374 (GIFF…MQGD), 394–414 (ITSL…FILI), 420–440 (KPFI…LVHY), 448–468 (SGII…TYVT), 488–508 (LYLA…GAVW), and 559–579 (KILC…AFML).

The protein belongs to the major facilitator superfamily.

It localises to the endosome membrane. In terms of biological role, involved in the transport of siderophore ferrioxamine B and so has a role in iron homeostasis. The polypeptide is Siderophore iron transporter 1 (SIT1) (Saccharomyces cerevisiae (strain ATCC 204508 / S288c) (Baker's yeast)).